The sequence spans 215 residues: Large ribosomal subunit protein mL43 (215 aa).

The protein belongs to the mitochondrion-specific ribosomal protein mL43 family. In terms of assembly, component of the mitochondrial large ribosomal subunit (mt-LSU). Mature mammalian 55S mitochondrial ribosomes consist of a small (28S) and a large (39S) subunit. The 28S small subunit contains a 12S ribosomal RNA (12S mt-rRNA) and 30 different proteins. The 39S large subunit contains a 16S rRNA (16S mt-rRNA), a copy of mitochondrial valine transfer RNA (mt-tRNA(Val)), which plays an integral structural role, and 52 different proteins. As to expression, high relative levels in skeletal muscle and testis. Lower levels of expression in the heart, brain, placenta, lung, liver, kidney, pancreas, spleen, thymus, prostate, ovary, small intestine, colon and leukocytes. Expression is coregulated with TWNK.

The protein localises to the mitochondrion. In Homo sapiens (Human), this protein is Large ribosomal subunit protein mL43 (MRPL43).